We begin with the raw amino-acid sequence, 458 residues long: Cysteine--tRNA ligase (458 aa).

Zn(2+) is bound at residue cysteine 27. The 'HIGH' region motif lies at 29-39 (MTVYDYMHIGH). The Zn(2+) site is built by cysteine 208, histidine 233, and glutamate 237. The 'KMSKS' region motif lies at 265 to 269 (KMSKS). ATP is bound at residue lysine 268.

Belongs to the class-I aminoacyl-tRNA synthetase family. As to quaternary structure, monomer. Requires Zn(2+) as cofactor.

The protein resides in the cytoplasm. It carries out the reaction tRNA(Cys) + L-cysteine + ATP = L-cysteinyl-tRNA(Cys) + AMP + diphosphate. The polypeptide is Cysteine--tRNA ligase (Coxiella burnetii (strain Dugway 5J108-111)).